A 96-amino-acid chain; its full sequence is Co-chaperonin GroES (96 aa).

It belongs to the GroES chaperonin family. In terms of assembly, heptamer of 7 subunits arranged in a ring. Interacts with the chaperonin GroEL.

The protein localises to the cytoplasm. Functionally, together with the chaperonin GroEL, plays an essential role in assisting protein folding. The GroEL-GroES system forms a nano-cage that allows encapsulation of the non-native substrate proteins and provides a physical environment optimized to promote and accelerate protein folding. GroES binds to the apical surface of the GroEL ring, thereby capping the opening of the GroEL channel. The protein is Co-chaperonin GroES of Hydrogenobaculum sp. (strain Y04AAS1).